A 70-amino-acid chain; its full sequence is SPbeta prophage-derived uncharacterized protein YotJ (70 aa).

The sequence is that of SPbeta prophage-derived uncharacterized protein YotJ (yotJ) from Bacillus subtilis (strain 168).